Reading from the N-terminus, the 492-residue chain is Probable cytochrome P450 310a1 (492 aa).

Cys-428 is a binding site for heme.

The protein belongs to the cytochrome P450 family. Requires heme as cofactor.

It localises to the endoplasmic reticulum membrane. The protein resides in the microsome membrane. May be involved in the metabolism of insect hormones and in the breakdown of synthetic insecticides. The chain is Probable cytochrome P450 310a1 (Cyp310a1) from Drosophila melanogaster (Fruit fly).